The chain runs to 467 residues: ATP-dependent protease ATPase subunit HslU (467 aa).

ATP is bound by residues Val22 and Gly64 to Glu69. The disordered stretch occupies residues Gln149–Glu192. Basic and acidic residues predominate over residues Glu178–Glu192. Residues Asp280, Glu345, and Arg417 each contribute to the ATP site.

Belongs to the ClpX chaperone family. HslU subfamily. As to quaternary structure, a double ring-shaped homohexamer of HslV is capped on each side by a ring-shaped HslU homohexamer. The assembly of the HslU/HslV complex is dependent on binding of ATP.

Its subcellular location is the cytoplasm. ATPase subunit of a proteasome-like degradation complex; this subunit has chaperone activity. The binding of ATP and its subsequent hydrolysis by HslU are essential for unfolding of protein substrates subsequently hydrolyzed by HslV. HslU recognizes the N-terminal part of its protein substrates and unfolds these before they are guided to HslV for hydrolysis. The chain is ATP-dependent protease ATPase subunit HslU from Staphylococcus aureus (strain bovine RF122 / ET3-1).